A 488-amino-acid chain; its full sequence is Glutamyl-tRNA(Gln) amidotransferase subunit A (488 aa).

Active-site charge relay system residues include Lys-77 and Ser-152. Residue Ser-176 is the Acyl-ester intermediate of the active site.

Belongs to the amidase family. GatA subfamily. Heterotrimer of A, B and C subunits.

It catalyses the reaction L-glutamyl-tRNA(Gln) + L-glutamine + ATP + H2O = L-glutaminyl-tRNA(Gln) + L-glutamate + ADP + phosphate + H(+). Allows the formation of correctly charged Gln-tRNA(Gln) through the transamidation of misacylated Glu-tRNA(Gln) in organisms which lack glutaminyl-tRNA synthetase. The reaction takes place in the presence of glutamine and ATP through an activated gamma-phospho-Glu-tRNA(Gln). The chain is Glutamyl-tRNA(Gln) amidotransferase subunit A from Streptococcus pyogenes serotype M49 (strain NZ131).